The primary structure comprises 164 residues: Lipoprotein signal peptidase (164 aa).

Transmembrane regions (helical) follow at residues 11-31 (YWVLALAAIVLDQWSKWAVLS), 41-61 (VIPSFFDLTLVYNPGAAFSFL), 64-84 (QGGWQKYFFLVLAVAVSAYLV), and 92-112 (FAALGKIGAAMIIGGASGNVI). Active-site residues include D122 and D140. Residues 132–152 (FYPAFNIADSFICVGAVLAVL) form a helical membrane-spanning segment.

It belongs to the peptidase A8 family.

It localises to the cell inner membrane. It carries out the reaction Release of signal peptides from bacterial membrane prolipoproteins. Hydrolyzes -Xaa-Yaa-Zaa-|-(S,diacylglyceryl)Cys-, in which Xaa is hydrophobic (preferably Leu), and Yaa (Ala or Ser) and Zaa (Gly or Ala) have small, neutral side chains.. The protein operates within protein modification; lipoprotein biosynthesis (signal peptide cleavage). Its function is as follows. This protein specifically catalyzes the removal of signal peptides from prolipoproteins. The protein is Lipoprotein signal peptidase of Neisseria gonorrhoeae (strain ATCC 700825 / FA 1090).